Here is a 304-residue protein sequence, read N- to C-terminus: Nod factor export ATP-binding protein I (304 aa).

Residues 6 to 236 form the ABC transporter domain; that stretch reads IDFQQVEKRY…EIGCDVIEIY (231 aa). 38–45 is a binding site for ATP; the sequence is GPNGAGKT.

Belongs to the ABC transporter superfamily. Lipooligosaccharide exporter (TC 3.A.1.102) family. In terms of assembly, the complex is composed of two ATP-binding proteins (NodI) and two transmembrane proteins (NodJ).

It localises to the cell inner membrane. Functionally, part of the ABC transporter complex NodIJ involved in the export of the nodulation factors (Nod factors), the bacterial signal molecules that induce symbiosis and subsequent nodulation induction. Nod factors are LCO (lipo-chitin oligosaccharide), a modified beta-1,4-linked N-acetylglucosamine oligosaccharide. This subunit is responsible for energy coupling to the transport system. The polypeptide is Nod factor export ATP-binding protein I (Burkholderia pseudomallei (strain 1710b)).